Here is a 1732-residue protein sequence, read N- to C-terminus: Lys-gingipain W83 (1732 aa).

The first 24 residues, 1-24, serve as a signal peptide directing secretion; the sequence is MRKLLLLIAASLLGVGLYAQSAKI. Positions 25–228 are excised as a propeptide; sequence KLDAPTTRTT…ETAYKQLFNR (204 aa). The Ca(2+) site is built by D313, D337, D339, F341, and E343. H444 functions as the Proton donor in the catalytic mechanism. C477 functions as the Nucleophile in the catalytic mechanism. Ca(2+)-binding residues include F482 and E491. The segment at 965–988 is disordered; sequence DAPNGTPNPNPNPNPNPGTTLSES. The segment covering 970 to 980 has biased composition (pro residues); sequence TPNPNPNPNPN. Ca(2+) contacts are provided by S988, E990, D1001, D1003, D1005, H1007, S1022, G1024, N1043, D1146, E1147, D1433, E1435, D1446, D1448, D1450, N1452, S1470, I1472, N1490, and D1595.

This sequence belongs to the peptidase C25 family. In terms of processing, proteolytically cleaved into a catalytic subunit and three adhesins. Arg-gingipain is involved in this post-translational processing.

It localises to the secreted. The catalysed reaction is Endopeptidase with strict specificity for lysyl bonds.. Functionally, cysteine proteinase with a strong preference for substrates with Lys in the P1 position. Hydrolyzes bovine hemoglobin, bovine serum albumin, casein, human placental type I collagen and human IgA and IgG. Disrupts the functions of polymorphonuclear leukocytes. May act as a virulence factor in the development of peridontal disease. Involved in the coaggregation of P.gingivalis with other oral bacteria. Has hemolytic activity; this is mediated by the adhesin domains and does not require the catalytic domain. This Porphyromonas gingivalis (Bacteroides gingivalis) protein is Lys-gingipain W83.